The sequence spans 126 residues: MPEPSKSAPAPKKGSKKAVTKAQKKDGKKRKRSRKESYSVYVYKVLKQVHPDTGISSKAMGIMNSFVNDIFERIAGEASRLAHYNKRSTITSREIQTAVRLLLPGELAKHAVSEGTKAVTKYTSSK.

A compositionally biased stretch (low complexity) spans 1–12 (MPEPSKSAPAPK). The segment at 1–36 (MPEPSKSAPAPKKGSKKAVTKAQKKDGKKRKRSRKE) is disordered. Residue proline 2 is modified to N-acetylproline. An ADP-ribosyl glutamic acid modification is found at glutamate 3. The residue at position 6 (lysine 6) is an N6-(2-hydroxyisobutyryl)lysine; alternate. Lysine 6 is subject to N6-(beta-hydroxybutyryl)lysine; alternate. Lysine 6 carries the post-translational modification N6-acetyllysine; alternate. N6-butyryllysine; alternate is present on lysine 6. Lysine 6 bears the N6-crotonyllysine; alternate mark. An N6-lactoyllysine; alternate modification is found at lysine 6. A Glycyl lysine isopeptide (Lys-Gly) (interchain with G-Cter in SUMO2); alternate cross-link involves residue lysine 6. Serine 7 is modified (ADP-ribosylserine). Position 12 is an N6-(beta-hydroxybutyryl)lysine; alternate (lysine 12). Lysine 12 and lysine 13 each carry N6-acetyllysine; alternate. Lysine 12 and lysine 13 each carry N6-crotonyllysine; alternate. Residue lysine 12 is modified to N6-lactoyllysine; alternate. At lysine 13 the chain carries N6-(2-hydroxyisobutyryl)lysine; alternate. Residue serine 15 is modified to Phosphoserine; by STK4/MST1. 4 positions are modified to N6-acetyllysine; alternate: lysine 16, lysine 17, lysine 21, and lysine 24. Lysine 16, lysine 17, lysine 21, and lysine 24 each carry N6-crotonyllysine; alternate. Lysine 16, lysine 17, lysine 21, and lysine 24 each carry N6-lactoyllysine; alternate. N6-(beta-hydroxybutyryl)lysine; alternate occurs at positions 17 and 21. At lysine 17 the chain carries N6-glutaryllysine; alternate. N6-(2-hydroxyisobutyryl)lysine; alternate occurs at positions 21 and 24. At lysine 21 the chain carries N6-butyryllysine; alternate. A Glycyl lysine isopeptide (Lys-Gly) (interchain with G-Cter in SUMO2); alternate cross-link involves residue lysine 21. Residue lysine 25 is modified to N6-(2-hydroxyisobutyryl)lysine. At lysine 35 the chain carries N6-(2-hydroxyisobutyryl)lysine; alternate. N6-(beta-hydroxybutyryl)lysine; alternate is present on lysine 35. Lysine 35 bears the N6-crotonyllysine; alternate mark. Lysine 35 carries the post-translational modification N6-glutaryllysine; alternate. An N6-succinyllysine; alternate modification is found at lysine 35. Residue lysine 35 forms a Glycyl lysine isopeptide (Lys-Gly) (interchain with G-Cter in ubiquitin); alternate linkage. Glutamate 36 is subject to PolyADP-ribosyl glutamic acid. At serine 37 the chain carries Phosphoserine; by AMPK. N6-(2-hydroxyisobutyryl)lysine; alternate occurs at positions 44, 47, and 58. Lysine 44 bears the N6-lactoyllysine; alternate mark. An N6-glutaryllysine; alternate mark is found at lysine 44 and lysine 47. Position 47 is an N6-methyllysine; alternate (lysine 47). N6,N6-dimethyllysine; alternate is present on lysine 58. At arginine 80 the chain carries Dimethylated arginine. The residue at position 86 (lysine 86) is an N6-(2-hydroxyisobutyryl)lysine; alternate. Residue lysine 86 is modified to N6-(beta-hydroxybutyryl)lysine; alternate. Residue lysine 86 is modified to N6-acetyllysine; alternate. At lysine 86 the chain carries N6-lactoyllysine; alternate. Lysine 86 is modified (N6,N6,N6-trimethyllysine; alternate). Arginine 87 and arginine 93 each carry omega-N-methylarginine. Lysine 109 is modified (N6-(2-hydroxyisobutyryl)lysine; alternate). Lysine 109 carries the N6-lactoyllysine; alternate modification. An N6-glutaryllysine; alternate modification is found at lysine 109. Lysine 109 is subject to N6-methyllysine; alternate. Serine 113 carries O-linked (GlcNAc) serine glycosylation. Threonine 116 is modified (phosphothreonine). An N6-(2-hydroxyisobutyryl)lysine; alternate mark is found at lysine 117 and lysine 121. 2 positions are modified to N6-(beta-hydroxybutyryl)lysine; alternate: lysine 117 and lysine 121. Lysine 117 and lysine 121 each carry N6-lactoyllysine; alternate. N6-glutaryllysine; alternate occurs at positions 117 and 121. N6-succinyllysine; alternate occurs at positions 117 and 121. Residue lysine 117 is modified to N6-malonyllysine; alternate. Position 117 is an N6-methylated lysine; alternate (lysine 117). Lysine 121 participates in a covalent cross-link: Glycyl lysine isopeptide (Lys-Gly) (interchain with G-Cter in ubiquitin); alternate.

Belongs to the histone H2B family. As to quaternary structure, the nucleosome is a histone octamer containing two molecules each of H2A, H2B, H3 and H4 assembled in one H3-H4 heterotetramer and two H2A-H2B heterodimers. The octamer wraps approximately 147 bp of DNA. Monoubiquitination at Lys-35 (H2BK34Ub) by the MSL1/MSL2 dimer is required for histone H3 'Lys-4' (H3K4me) and 'Lys-79' (H3K79me) methylation and transcription activation at specific gene loci, such as HOXA9 and MEIS1 loci. Similarly, monoubiquitination at Lys-121 (H2BK120Ub) by the RNF20/40 complex gives a specific tag for epigenetic transcriptional activation and is also prerequisite for histone H3 'Lys-4' and 'Lys-79' methylation. It also functions cooperatively with the FACT dimer to stimulate elongation by RNA polymerase II. H2BK120Ub also acts as a regulator of mRNA splicing: deubiquitination by USP49 is required for efficient cotranscriptional splicing of a large set of exons. In terms of processing, phosphorylation at Ser-37 (H2BS36ph) by AMPK in response to stress promotes transcription. Phosphorylated on Ser-15 (H2BS14ph) by STK4/MST1 during apoptosis; which facilitates apoptotic chromatin condensation. Also phosphorylated on Ser-15 in response to DNA double strand breaks (DSBs), and in correlation with somatic hypermutation and immunoglobulin class-switch recombination. Post-translationally, glcNAcylation at Ser-113 promotes monoubiquitination of Lys-121. It fluctuates in response to extracellular glucose, and associates with transcribed genes. ADP-ribosylated by PARP1 or PARP2 on Ser-7 (H2BS6ADPr) in response to DNA damage. H2BS6ADPr promotes recruitment of CHD1L. Mono-ADP-ribosylated on Glu-3 (H2BE2ADPr) by PARP3 in response to single-strand breaks. Poly ADP-ribosylation on Glu-36 (H2BE35ADPr) by PARP1 regulates adipogenesis: it inhibits phosphorylation at Ser-37 (H2BS36ph), thereby blocking expression of pro-adipogenetic genes. In terms of processing, crotonylation (Kcr) is specifically present in male germ cells and marks testis-specific genes in post-meiotic cells, including X-linked genes that escape sex chromosome inactivation in haploid cells. Crotonylation marks active promoters and enhancers and confers resistance to transcriptional repressors. It is also associated with post-meiotically activated genes on autosomes. Post-translationally, lactylated in macrophages by EP300/P300 by using lactoyl-CoA directly derived from endogenous or exogenous lactate, leading to stimulates gene transcription.

Its subcellular location is the nucleus. The protein localises to the chromosome. Core component of nucleosome. Nucleosomes wrap and compact DNA into chromatin, limiting DNA accessibility to the cellular machineries which require DNA as a template. Histones thereby play a central role in transcription regulation, DNA repair, DNA replication and chromosomal stability. DNA accessibility is regulated via a complex set of post-translational modifications of histones, also called histone code, and nucleosome remodeling. This chain is Histone H2B type 1-N, found in Homo sapiens (Human).